The primary structure comprises 391 residues: Probable chaperonin-like protein PrmG (391 aa).

The disordered stretch occupies residues 153 to 191 (TTRWSVRSSPPPSNTSARTASSPPRRATHSGCRSRSSTA). Polar residues predominate over residues 154 to 174 (TRWSVRSSPPPSNTSARTASS).

This sequence belongs to the chaperonin (HSP60) family.

In terms of biological role, probably plays an essential role in the productive folding of PrmA and PrmC, and thus in the formation of the active PrmABCD complex. The polypeptide is Probable chaperonin-like protein PrmG (Gordonia sp. (strain TY-5)).